Reading from the N-terminus, the 307-residue chain is Protoheme IX farnesyltransferase (307 aa).

A run of 9 helical transmembrane segments spans residues 31 to 51 (VMSL…YSVH), 52 to 72 (PFIA…AGAI), 102 to 119 (ALSF…FMAL), 123 to 145 (LLAS…IWLK), 151 to 171 (NIVI…AAVS), 179 to 199 (VILF…LALF), 225 to 245 (ILIY…IGMS), 247 to 267 (FIYL…AGSL), and 281 to 301 (FVYS…TNTI).

This sequence belongs to the UbiA prenyltransferase family. Protoheme IX farnesyltransferase subfamily.

The protein localises to the cell inner membrane. It carries out the reaction heme b + (2E,6E)-farnesyl diphosphate + H2O = Fe(II)-heme o + diphosphate. The protein operates within porphyrin-containing compound metabolism; heme O biosynthesis; heme O from protoheme: step 1/1. In terms of biological role, converts heme B (protoheme IX) to heme O by substitution of the vinyl group on carbon 2 of heme B porphyrin ring with a hydroxyethyl farnesyl side group. This Rickettsia canadensis (strain McKiel) protein is Protoheme IX farnesyltransferase.